Here is a 192-residue protein sequence, read N- to C-terminus: Peptidyl-tRNA hydrolase (192 aa).

Residue tyrosine 14 participates in tRNA binding. Residue histidine 19 is the Proton acceptor of the active site. The tRNA site is built by tyrosine 64, asparagine 66, and asparagine 112.

This sequence belongs to the PTH family. Monomer.

It localises to the cytoplasm. It carries out the reaction an N-acyl-L-alpha-aminoacyl-tRNA + H2O = an N-acyl-L-amino acid + a tRNA + H(+). Hydrolyzes ribosome-free peptidyl-tRNAs (with 1 or more amino acids incorporated), which drop off the ribosome during protein synthesis, or as a result of ribosome stalling. Its function is as follows. Catalyzes the release of premature peptidyl moieties from peptidyl-tRNA molecules trapped in stalled 50S ribosomal subunits, and thus maintains levels of free tRNAs and 50S ribosomes. The polypeptide is Peptidyl-tRNA hydrolase (Prosthecochloris aestuarii (strain DSM 271 / SK 413)).